The following is a 138-amino-acid chain: Outer membrane protein assembly factor BamE (138 aa).

Positions 1 to 42 (MSHLTMIKTLNLRPFHSASALRKIVITSILGVAVTMSGCSLL) are cleaved as a signal peptide.

It belongs to the BamE family. In terms of assembly, part of the Bam complex.

It localises to the cell outer membrane. In terms of biological role, part of the outer membrane protein assembly complex, which is involved in assembly and insertion of beta-barrel proteins into the outer membrane. The polypeptide is Outer membrane protein assembly factor BamE (Psychrobacter arcticus (strain DSM 17307 / VKM B-2377 / 273-4)).